The sequence spans 355 residues: DNA-directed RNA polymerase subunit alpha (355 aa).

Residues 1–248 (MYYDDGIPVF…EQLQPFISSD (248 aa)) form an alpha N-terminal domain (alpha-NTD) region. Residues 267–355 (YDPILLRKVD…ELARQHTDED (89 aa)) form an alpha C-terminal domain (alpha-CTD) region.

Belongs to the RNA polymerase alpha chain family. In terms of assembly, homodimer. The RNAP catalytic core consists of 2 alpha, 1 beta, 1 beta' and 1 omega subunit. When a sigma factor is associated with the core the holoenzyme is formed, which can initiate transcription.

The catalysed reaction is RNA(n) + a ribonucleoside 5'-triphosphate = RNA(n+1) + diphosphate. DNA-dependent RNA polymerase catalyzes the transcription of DNA into RNA using the four ribonucleoside triphosphates as substrates. In Wolbachia sp. subsp. Brugia malayi (strain TRS), this protein is DNA-directed RNA polymerase subunit alpha.